The primary structure comprises 34 residues: Photosystem II reaction center protein M (34 aa).

A helical membrane pass occupies residues 5 to 25; sequence ILAFIATALFISIPTAFLLIP.

This sequence belongs to the PsbM family. As to quaternary structure, PSII is composed of 1 copy each of membrane proteins PsbA, PsbB, PsbC, PsbD, PsbE, PsbF, PsbH, PsbI, PsbJ, PsbK, PsbL, PsbM, PsbT, PsbX, PsbY, PsbZ, Psb30/Ycf12, at least 3 peripheral proteins of the oxygen-evolving complex and a large number of cofactors. It forms dimeric complexes.

The protein resides in the plastid. It localises to the chloroplast thylakoid membrane. Functionally, one of the components of the core complex of photosystem II (PSII). PSII is a light-driven water:plastoquinone oxidoreductase that uses light energy to abstract electrons from H(2)O, generating O(2) and a proton gradient subsequently used for ATP formation. It consists of a core antenna complex that captures photons, and an electron transfer chain that converts photonic excitation into a charge separation. This subunit is found at the monomer-monomer interface. This is Photosystem II reaction center protein M from Psilotum nudum (Whisk fern).